The chain runs to 349 residues: 3-dehydroquinate synthase (349 aa).

Residues 63-68 (DGEEYK), 97-101 (GVIGD), 121-122 (TT), lysine 134, lysine 143, and 161-164 (FLTT) contribute to the NAD(+) site. Positions 176, 235, and 252 each coordinate Zn(2+).

The protein belongs to the sugar phosphate cyclases superfamily. Dehydroquinate synthase family. It depends on Co(2+) as a cofactor. Zn(2+) serves as cofactor. Requires NAD(+) as cofactor.

The protein resides in the cytoplasm. The enzyme catalyses 7-phospho-2-dehydro-3-deoxy-D-arabino-heptonate = 3-dehydroquinate + phosphate. It participates in metabolic intermediate biosynthesis; chorismate biosynthesis; chorismate from D-erythrose 4-phosphate and phosphoenolpyruvate: step 2/7. Functionally, catalyzes the conversion of 3-deoxy-D-arabino-heptulosonate 7-phosphate (DAHP) to dehydroquinate (DHQ). The chain is 3-dehydroquinate synthase from Sulfurimonas denitrificans (strain ATCC 33889 / DSM 1251) (Thiomicrospira denitrificans (strain ATCC 33889 / DSM 1251)).